The chain runs to 483 residues: NADH-quinone oxidoreductase subunit N (483 aa).

13 helical membrane-spanning segments follow: residues 7–27, 33–53, 76–96, 108–128, 161–181, 196–216, 235–255, 272–292, 297–317, 323–343, 369–389, 402–422, and 442–462; these read AILT…LGAV, ALAS…AFYI, FAKI…QDYM, VLII…DLIA, FVLG…AYGF, GGDM…GLAF, PTPI…ALFA, IVAF…IGQT, LMAY…SAGT, AMLI…AFIL, ALAI…LGFF, GLVW…FYYI, and MGLV…LGWV.

Belongs to the complex I subunit 2 family. As to quaternary structure, NDH-1 is composed of 14 different subunits. Subunits NuoA, H, J, K, L, M, N constitute the membrane sector of the complex.

It is found in the cell inner membrane. It catalyses the reaction a quinone + NADH + 5 H(+)(in) = a quinol + NAD(+) + 4 H(+)(out). NDH-1 shuttles electrons from NADH, via FMN and iron-sulfur (Fe-S) centers, to quinones in the respiratory chain. The immediate electron acceptor for the enzyme in this species is believed to be ubiquinone. Couples the redox reaction to proton translocation (for every two electrons transferred, four hydrogen ions are translocated across the cytoplasmic membrane), and thus conserves the redox energy in a proton gradient. In Jannaschia sp. (strain CCS1), this protein is NADH-quinone oxidoreductase subunit N.